A 210-amino-acid chain; its full sequence is PEP-dependent dihydroxyacetone kinase, ADP-binding subunit DhaL (210 aa).

A DhaL domain is found at 6–206; it reads TQIVNWLTRC…VMFMMQMLAL (201 aa). The Mg(2+) site is built by Asp-30, Asp-35, and Asp-37. ADP contacts are provided by residues 38–41, 79–80, Gly-121, Met-130, Arg-178, and 191–193; these read HGLN, AS, and DPG.

As to quaternary structure, homodimer. The dihydroxyacetone kinase complex is composed of a homodimer of DhaM, a homodimer of DhaK and the subunit DhaL. DhaL also forms a complex with DhaR. It depends on Mg(2+) as a cofactor.

It localises to the cytoplasm. It catalyses the reaction dihydroxyacetone + phosphoenolpyruvate = dihydroxyacetone phosphate + pyruvate. Its pathway is polyol metabolism; glycerol degradation. In terms of biological role, ADP-binding subunit of the dihydroxyacetone kinase, which is responsible for the phosphoenolpyruvate (PEP)-dependent phosphorylation of dihydroxyacetone. DhaL-ADP is converted to DhaL-ATP via a phosphoryl group transfer from DhaM and transmits it to dihydroxyacetone bound to DhaK. DhaL also acts as coactivator of the transcription activator DhaR by binding to the sensor domain of DhaR. In the presence of dihydroxyacetone, DhaL-ADP displaces DhaK and stimulates DhaR activity. In the absence of dihydroxyacetone, DhaL-ADP is converted by the PTS to DhaL-ATP, which does not bind to DhaR. The polypeptide is PEP-dependent dihydroxyacetone kinase, ADP-binding subunit DhaL (Escherichia coli (strain K12)).